The chain runs to 293 residues: Serine/threonine-protein phosphatase 2A catalytic subunit beta isoform (293 aa).

4 residues coordinate Mn(2+): aspartate 41, histidine 43, aspartate 69, and asparagine 101. Catalysis depends on histidine 102, which acts as the Proton donor. Histidine 151 and histidine 225 together coordinate Mn(2+). Tyrosine 291 is modified (phosphotyrosine). Residue leucine 293 is modified to Leucine methyl ester.

It belongs to the PPP phosphatase family. PP-1 subfamily. As to quaternary structure, found in a complex with at least ARL2, PPP2CB, PPP2R1A, PPP2R2A, PPP2R5E and TBCD. Interacts with TBCD. PP2A consists of a common heterodimeric core enzyme (composed of a 36 kDa catalytic subunit (subunit C) and a 65 kDa constant regulatory subunit (PR65) (subunit A)) that associates with a variety of regulatory subunits. Proteins that associate with the core dimer include three families of regulatory subunits B (the R2/B/PR55/B55, R3/B''/PR72/PR130/PR59 and R5/B'/B56 families), the 48 kDa variable regulatory subunit, viral proteins, and cell signaling molecules. Binds PPME1. May indirectly interact with SGO1, most probably through regulatory B56 subunits. Interacts with CTTNBP2NL. Interacts with PTPA. Part of the core of STRIPAK complexes composed of PP2A catalytic and scaffolding subunits, the striatins (PP2A regulatory subunits), the striatin-associated proteins MOB4, STRIP1 and STRIP2, PDCD10 and members of the STE20 kinases, such as STK24 and STK26. Requires Mn(2+) as cofactor. Post-translationally, reversibly methyl esterified on Leu-293 by leucine carboxyl methyltransferase 1 (Lcmt1) and protein phosphatase methylesterase 1 (PPME1). Carboxyl methylation influences the affinity of the catalytic subunit for the different regulatory subunits, thereby modulating the PP2A holoenzyme's substrate specificity, enzyme activity and cellular localization. Phosphorylation of either threonine (by autophosphorylation-activated protein kinase) or tyrosine results in inactivation of the phosphatase. Auto-dephosphorylation has been suggested as a mechanism for reactivation. In terms of processing, may be monoubiquitinated by NOSIP.

It localises to the cytoplasm. Its subcellular location is the nucleus. It is found in the chromosome. The protein localises to the centromere. The protein resides in the cytoskeleton. It localises to the spindle pole. It carries out the reaction O-phospho-L-seryl-[protein] + H2O = L-seryl-[protein] + phosphate. The enzyme catalyses O-phospho-L-threonyl-[protein] + H2O = L-threonyl-[protein] + phosphate. Catalytic subunit of protein phosphatase 2A (PP2A), a serine/threonine phosphatase involved in the regulation of a wide variety of enzymes, signal transduction pathways, and cellular events. PP2A can modulate the activity of phosphorylase B kinase, casein kinase 2, mitogen-stimulated S6 kinase, and MAP-2 kinase. Part of the striatin-interacting phosphatase and kinase (STRIPAK) complexes. STRIPAK complexes have critical roles in protein (de)phosphorylation and are regulators of multiple signaling pathways including Hippo, MAPK, nuclear receptor and cytoskeleton remodeling. Different types of STRIPAK complexes are involved in a variety of biological processes such as cell growth, differentiation, apoptosis, metabolism and immune regulation. This chain is Serine/threonine-protein phosphatase 2A catalytic subunit beta isoform (PPP2CB), found in Sus scrofa (Pig).